Here is a 146-residue protein sequence, read N- to C-terminus: Large ribosomal subunit protein uL15 (146 aa).

Residues 1-54 form a disordered region; that stretch reads MNLTDLRPADGSKQSGNFRRGRGHGSGNGKTAGKGHKGQKARSGAPRVGFEGGQ.

Belongs to the universal ribosomal protein uL15 family. Part of the 50S ribosomal subunit.

Functionally, binds to the 23S rRNA. The polypeptide is Large ribosomal subunit protein uL15 (Lachnoclostridium phytofermentans (strain ATCC 700394 / DSM 18823 / ISDg) (Clostridium phytofermentans)).